The chain runs to 267 residues: Hydroxyethylthiazole kinase (267 aa).

Residue methionine 46 participates in substrate binding. ATP contacts are provided by arginine 121 and threonine 167. Residue alanine 194 participates in substrate binding.

It belongs to the Thz kinase family. Mg(2+) is required as a cofactor.

The enzyme catalyses 5-(2-hydroxyethyl)-4-methylthiazole + ATP = 4-methyl-5-(2-phosphooxyethyl)-thiazole + ADP + H(+). The protein operates within cofactor biosynthesis; thiamine diphosphate biosynthesis; 4-methyl-5-(2-phosphoethyl)-thiazole from 5-(2-hydroxyethyl)-4-methylthiazole: step 1/1. In terms of biological role, catalyzes the phosphorylation of the hydroxyl group of 4-methyl-5-beta-hydroxyethylthiazole (THZ). The chain is Hydroxyethylthiazole kinase from Rhizobium leguminosarum bv. trifolii (strain WSM2304).